The chain runs to 213 residues: NADH dehydrogenase [ubiquinone] iron-sulfur protein 7, mitochondrial (213 aa).

The N-terminal 37 residues, 1–37 (MAVLSAPGLRGFRILGLRSSVGPAVQARSVHQSVATD), are a transit peptide targeting the mitochondrion. Residues 30 to 44 (VHQSVATDGPSSTQP) are compositionally biased toward polar residues. The tract at residues 30–53 (VHQSVATDGPSSTQPALPKARAVA) is disordered. Cys-88 and Cys-89 together coordinate [4Fe-4S] cluster. Arg-111 is modified (hydroxyarginine). Positions 153 and 183 each coordinate [4Fe-4S] cluster.

This sequence belongs to the complex I 20 kDa subunit family. As to quaternary structure, core subunit of respiratory chain NADH dehydrogenase (Complex I) which is composed of 45 different subunits. This is a component of the iron-sulfur (IP) fragment of the enzyme. Requires [4Fe-4S] cluster as cofactor. Post-translationally, hydroxylated ar Arg-111 by NDUFAF5 early in the pathway of assembly of complex I, before the formation of the juncture between peripheral and membrane arms.

It localises to the mitochondrion inner membrane. It catalyses the reaction a ubiquinone + NADH + 5 H(+)(in) = a ubiquinol + NAD(+) + 4 H(+)(out). Its function is as follows. Core subunit of the mitochondrial membrane respiratory chain NADH dehydrogenase (Complex I) which catalyzes electron transfer from NADH through the respiratory chain, using ubiquinone as an electron acceptor. Essential for the catalytic activity of complex I. This Pan troglodytes (Chimpanzee) protein is NADH dehydrogenase [ubiquinone] iron-sulfur protein 7, mitochondrial (NDUFS7).